The primary structure comprises 176 residues: Caltractin (176 aa).

The tract at residues 1 to 27 is disordered; sequence MNRAAIAAGKPSGSISTGKPRRKTRAE. 4 EF-hand domains span residues 31-66, 67-102, 104-139, and 140-175; these read EMKHEIREAFDLFDADRSGRIDFHELKVAMRALGFD, VKKEEIQRIMNEYDRDQLGEITFQDFEEVMIEKISN, DPTEEILKAFRLFDDDATGRISLKNLRRVAKELSEN, and ISDEELLAMIQEFDRDGDGEIDEEDFIAILRSTSAF. Residues Asp-44, Asp-46, Ser-48, Arg-50, and Glu-55 each contribute to the Ca(2+) site. The Ca(2+) site is built by Asp-153, Asp-155, Asp-157, Glu-159, and Asp-164.

Belongs to the centrin family. As to quaternary structure, monomer.

Its subcellular location is the cytoplasm. It localises to the cytoskeleton. The protein localises to the microtubule organizing center. It is found in the centrosome. In terms of biological role, plays a fundamental role in microtubule-organizing center structure and function. This Giardia intestinalis (Giardia lamblia) protein is Caltractin (CAL).